Here is a 696-residue protein sequence, read N- to C-terminus: Transcriptional activator of proteases prtT (696 aa).

The disordered stretch occupies residues 106-126 (DVADGSGRPESSTSGDTIRPK). Residues 136-165 (CNTCRKLKTRCDLDPRGHACRRCLSLRIEC) constitute a DNA-binding region (zn(2)-C6 fungal-type).

It belongs to the prtT family.

Its subcellular location is the nucleus. Functionally, transcription factor required for protein utilization and degradation. Regulates transcription of major secreted proteases including a serine alkaline protease (alk1), a metalloprotease (mep), an aspergillopepsin (pep1), a sedolisin (sed2) and two dipeptidyl-peptidases (dppIV and dppV). However, it is not a virulence determinant in leukopenic mice. The sequence is that of Transcriptional activator of proteases prtT (prtT) from Aspergillus fumigatus (strain ATCC MYA-4609 / CBS 101355 / FGSC A1100 / Af293) (Neosartorya fumigata).